We begin with the raw amino-acid sequence, 246 residues long: uncharacterized protein (246 aa).

Residues 120–149 form a disordered region; sequence EKCAGETSPYTSASVSNSKKATSSSNFTKS. Residues 130–149 show a composition bias toward low complexity; the sequence is TSASVSNSKKATSSSNFTKS.

This is an uncharacterized protein from Caenorhabditis elegans.